Here is a 48-residue protein sequence, read N- to C-terminus: uncharacterized protein (48 aa).

This is an uncharacterized protein from Haemophilus influenzae (strain ATCC 51907 / DSM 11121 / KW20 / Rd).